We begin with the raw amino-acid sequence, 439 residues long: Serine hydroxymethyltransferase (439 aa).

(6S)-5,6,7,8-tetrahydrofolate-binding positions include leucine 119 and 123–125; that span reads GHL. At lysine 228 the chain carries N6-(pyridoxal phosphate)lysine. 370–372 is a binding site for (6S)-5,6,7,8-tetrahydrofolate; it reads SPF.

It belongs to the SHMT family. Homodimer. Pyridoxal 5'-phosphate serves as cofactor.

The protein resides in the cytoplasm. It carries out the reaction (6R)-5,10-methylene-5,6,7,8-tetrahydrofolate + glycine + H2O = (6S)-5,6,7,8-tetrahydrofolate + L-serine. It functions in the pathway one-carbon metabolism; tetrahydrofolate interconversion. The protein operates within amino-acid biosynthesis; glycine biosynthesis; glycine from L-serine: step 1/1. In terms of biological role, catalyzes the reversible interconversion of serine and glycine with tetrahydrofolate (THF) serving as the one-carbon carrier. This reaction serves as the major source of one-carbon groups required for the biosynthesis of purines, thymidylate, methionine, and other important biomolecules. Also exhibits THF-independent aldolase activity toward beta-hydroxyamino acids, producing glycine and aldehydes, via a retro-aldol mechanism. The protein is Serine hydroxymethyltransferase of Chlorobium phaeobacteroides (strain BS1).